Reading from the N-terminus, the 379-residue chain is MNTPRIIVAMSGGVDSSVAAWRLNSQRETIAGLFMRNWTDDGNGQCHAEEDRRDAVAVCGILGIAFHFRDFSHEYWQEVFTHFLAEYANGRTPNPDVLCNREIKFKHFLETARELGADSIATGHYARIKHYRQRWHLLRGADRSKDQSYFLHQLGQEQLAATMFPIGDLEKPQLRQLAHQAGLPTHAKKDSTGICFIGERNFREFLKQYLPAQPGEIRDPQEQRIAEHPGVFYFTLGQRQGLNIGGVRNRPPSPWYVIGKDLATNVLYVDQHRDSPFLQSRWLRSEPAHWVSGSPPAPTFTCTAQTRYRQADEPCKVTVRNDGSLDVDFTQTQWAVTPGQSLVLYDGNECLGGAVIATTDAPLERKRARNLSKTENVLQ.

ATP is bound by residues 9 to 16 (AMSGGVDS) and methionine 35. Residues 94–96 (NPD) are interaction with target base in tRNA. The active-site Nucleophile is cysteine 99. An intrachain disulfide couples cysteine 99 to cysteine 195. An ATP-binding site is contributed by glycine 123. The interval 145–147 (KDQ) is interaction with tRNA. Catalysis depends on cysteine 195, which acts as the Cysteine persulfide intermediate. The segment at 307-308 (RY) is interaction with tRNA.

This sequence belongs to the MnmA/TRMU family.

The protein resides in the cytoplasm. It catalyses the reaction S-sulfanyl-L-cysteinyl-[protein] + uridine(34) in tRNA + AH2 + ATP = 2-thiouridine(34) in tRNA + L-cysteinyl-[protein] + A + AMP + diphosphate + H(+). Catalyzes the 2-thiolation of uridine at the wobble position (U34) of tRNA, leading to the formation of s(2)U34. The chain is tRNA-specific 2-thiouridylase MnmA from Xylella fastidiosa (strain 9a5c).